The sequence spans 174 residues: Xanthine-guanine phosphoribosyltransferase (174 aa).

5-phospho-alpha-D-ribose 1-diphosphate-binding positions include 49–50 (RG) and 108–116 (DDLVDTGAT). Aspartate 109 serves as a coordination point for Mg(2+). Guanine-binding residues include aspartate 112 and isoleucine 155. 2 residues coordinate xanthine: aspartate 112 and isoleucine 155. Residues 112–116 (DTGAT) and 154–155 (WI) contribute to the GMP site.

Belongs to the purine/pyrimidine phosphoribosyltransferase family. XGPT subfamily. In terms of assembly, homotetramer. It depends on Mg(2+) as a cofactor.

Its subcellular location is the cell inner membrane. The enzyme catalyses GMP + diphosphate = guanine + 5-phospho-alpha-D-ribose 1-diphosphate. The catalysed reaction is XMP + diphosphate = xanthine + 5-phospho-alpha-D-ribose 1-diphosphate. It carries out the reaction IMP + diphosphate = hypoxanthine + 5-phospho-alpha-D-ribose 1-diphosphate. The protein operates within purine metabolism; GMP biosynthesis via salvage pathway; GMP from guanine: step 1/1. Its pathway is purine metabolism; XMP biosynthesis via salvage pathway; XMP from xanthine: step 1/1. Purine salvage pathway enzyme that catalyzes the transfer of the ribosyl-5-phosphate group from 5-phospho-alpha-D-ribose 1-diphosphate (PRPP) to the N9 position of the 6-oxopurines guanine and xanthine to form the corresponding ribonucleotides GMP (guanosine 5'-monophosphate) and XMP (xanthosine 5'-monophosphate), with the release of PPi. To a lesser extent, also acts on hypoxanthine. The protein is Xanthine-guanine phosphoribosyltransferase of Rhodopseudomonas palustris (strain BisB18).